Reading from the N-terminus, the 205-residue chain is Colicin-E8 (205 aa).

Disordered stretches follow at residues 24 to 109 and 136 to 187; these read AQTD…PDRI and PELS…VYDM. 3 stretches are compositionally biased toward basic and acidic residues: residues 53-76, 88-99, and 159-178; these read QERR…ESKR, PVGDKWLDDAGK, and RNKD…DKPI. The Zn(2+) site is built by H173, H198, and H202.

It belongs to the colicin/pyosin nuclease family.

This plasmid-coded bactericidal protein is an endonuclease active on both single- and double-stranded DNA but with undefined specificity. Functionally, colicins are polypeptide toxins produced by and active against E.coli and closely related bacteria. The protein is Colicin-E8 (col) of Escherichia coli.